A 378-amino-acid chain; its full sequence is tRNA N(3)-cytidine methyltransferase METTL2B (378 aa).

N-acetylalanine is present on Ala-2. Ser-4 carries the phosphoserine modification. Positions 78 and 82 each coordinate S-adenosyl-L-methionine. The residue at position 154 (Thr-154) is a Phosphothreonine. 5 residues coordinate S-adenosyl-L-methionine: Gly-188, Asp-213, Asp-239, Leu-240, and Ile-260.

It belongs to the methyltransferase superfamily. METL family. In terms of assembly, monomer. Interacts with DALRD3.

Its subcellular location is the cytoplasm. It catalyses the reaction cytidine(32) in tRNA(Thr) + S-adenosyl-L-methionine = N(3)-methylcytidine(32) in tRNA(Thr) + S-adenosyl-L-homocysteine + H(+). The enzyme catalyses cytidine(32) in tRNA(Arg)(CCU) + S-adenosyl-L-methionine = N(3)-methylcytidine(32) in tRNA(Arg)(CCU) + S-adenosyl-L-homocysteine + H(+). Functionally, S-adenosyl-L-methionine-dependent methyltransferase that mediates N(3)-methylcytidine modification of residue 32 of the tRNA anticodon loop of tRNA(Thr)(UGU) and tRNA(Arg)(CCU). This Homo sapiens (Human) protein is tRNA N(3)-cytidine methyltransferase METTL2B.